The sequence spans 194 residues: GTP cyclohydrolase 1 (194 aa).

The Zn(2+) site is built by C83, H86, and C155.

The protein belongs to the GTP cyclohydrolase I family. Toroid-shaped homodecamer, composed of two pentamers of five dimers.

The catalysed reaction is GTP + H2O = 7,8-dihydroneopterin 3'-triphosphate + formate + H(+). Its pathway is cofactor biosynthesis; 7,8-dihydroneopterin triphosphate biosynthesis; 7,8-dihydroneopterin triphosphate from GTP: step 1/1. The polypeptide is GTP cyclohydrolase 1 (folE) (Streptococcus pyogenes serotype M1).